We begin with the raw amino-acid sequence, 301 residues long: Probable alpha-L-glutamate ligase (301 aa).

Residues 104–287 (LQLLSRRGIG…VAGIIIEHLE (184 aa)) enclose the ATP-grasp domain. Residues Lys-141, 178-179 (EY), Asp-187, and 211-213 (RSN) contribute to the ATP site. Mg(2+) is bound by residues Asp-248, Glu-260, and Asn-262. Asp-248, Glu-260, and Asn-262 together coordinate Mn(2+).

This sequence belongs to the RimK family. Mg(2+) serves as cofactor. Mn(2+) is required as a cofactor.

The protein is Probable alpha-L-glutamate ligase of Pseudomonas fluorescens (strain SBW25).